A 315-amino-acid chain; its full sequence is Putative serine/threonine-protein phosphatase PP2A-4 catalytic subunit (315 aa).

Mn(2+) contacts are provided by Asp63, His65, Asp91, and Asn123. His124 (proton donor) is an active-site residue. Mn(2+) is bound by residues His173 and His247.

This sequence belongs to the PPP phosphatase family. PP-2A subfamily. Mn(2+) serves as cofactor.

It is found in the cytoplasm. The catalysed reaction is O-phospho-L-seryl-[protein] + H2O = L-seryl-[protein] + phosphate. The enzyme catalyses O-phospho-L-threonyl-[protein] + H2O = L-threonyl-[protein] + phosphate. The polypeptide is Putative serine/threonine-protein phosphatase PP2A-4 catalytic subunit (PP2A4) (Oryza sativa subsp. indica (Rice)).